Consider the following 245-residue polypeptide: Probable phosphatase PC1_1798 (245 aa).

Positions 7, 9, 15, 40, 73, 101, 131, 192, and 194 each coordinate Zn(2+).

It belongs to the PHP family. Homotrimer. Zn(2+) is required as a cofactor.

The sequence is that of Probable phosphatase PC1_1798 from Pectobacterium carotovorum subsp. carotovorum (strain PC1).